Reading from the N-terminus, the 667-residue chain is Gamma-tubulin complex component 4 (667 aa).

The segment at 424 to 446 is disordered; that stretch reads DHKADATQPREVPSRETSPREAP.

Belongs to the TUBGCP family. In terms of assembly, component of the gamma-tubulin ring complex (gTuRC) consisting of TUBGCP2, TUBGCP3, TUBGCP4, TUBGCP5 and TUBGCP6 and gamma-tubulin TUBG1 or TUBG2. TUBGCP2, TUBGCP3, TUBGCP4, TUBGCP5 and TUBGCP6 assemble in a 5:5:2:1:1 stoichiometry; each is associated with a gamma-tubulin, thereby arranging 14 gamma-tubulins in a helical manner. Gamma-tubulin at the first position is blocked by TUBGCP3 at the last position, allowing 13 protafilaments to grow into a microtubule. The gTuRC (via TUBGCP3 and TUBGCP6) interacts with ACTB and MZT1; the interactions form a luminal bridge that stabilizes the initial structure during complex assembly. The gTuRC (via TUBGCP2) interacts with MZT2A/MZT2B and CDK5RAP2 (via CM1 motif); the interactions play a role in gTuRC activation. Interacts with NINL. Interacts with ATF5; the ATF5:PCNT:polyglutamylated tubulin (PGT) tripartite unites the mother centriole and the pericentriolar material (PCM) in the centrosome.

The protein resides in the cytoplasm. It localises to the cytoskeleton. It is found in the microtubule organizing center. The protein localises to the centrosome. Functionally, component of the gamma-tubulin ring complex (gTuRC) which mediates microtubule nucleation. The gTuRC regulates the minus-end nucleation of alpha-beta tubulin heterodimers that grow into microtubule protafilaments, a critical step in centrosome duplication and spindle formation. The sequence is that of Gamma-tubulin complex component 4 (Tubgcp4) from Mus musculus (Mouse).